A 1209-amino-acid polypeptide reads, in one-letter code: Protein phosphatase 1 regulatory subunit 26 (1209 aa).

Disordered stretches follow at residues 57 to 91 (DGAA…TVHK), 145 to 279 (SGAA…HRQG), 291 to 471 (KPPR…VERS), 501 to 532 (GSDG…DSDD), 555 to 694 (GESC…EDLD), 733 to 836 (EQLG…SNDS), 848 to 1033 (KAKE…FAHQ), 1052 to 1072 (RGGV…GLPS), and 1118 to 1209 (AFRE…VVKV). Residues 63–91 (TSDERAAQRGHRAEGCHDARPAAKPTVHK) are compositionally biased toward basic and acidic residues. Residues 201–219 (QVGSSKDQGSASPVSVSSD) show a composition bias toward low complexity. Over residues 226 to 255 (IRAEIEQFLNEKRQHETQKCDGSVEKKPDT) the composition is skewed to basic and acidic residues. Over residues 301-321 (QPRSLRSKVTTTQENEGSTKP) the composition is skewed to polar residues. A compositionally biased stretch (low complexity) spans 352 to 362 (SAAQASEASDS). The segment covering 442–454 (DTDHAPKLLKETK) has biased composition (basic and acidic residues). 3 stretches are compositionally biased toward basic and acidic residues: residues 609–637 (KMQE…RRDL), 667–685 (KTDE…DKSS), and 757–766 (SKRDSGEGPG). Composition is skewed to low complexity over residues 821–836 (PGSL…SNDS) and 852–861 (SVSSSEVQAE). Serine 1161 carries the post-translational modification Phosphoserine. Low complexity predominate over residues 1187 to 1209 (GSDASDFSDTSTEDSGGSSVVKV).

Interacts with UTP20 and PPP1CA. Ubiquitous in normal tissues. Expressed in numerous adenocarcinoma cell lines.

Its subcellular location is the nucleus. The protein localises to the nucleolus. Its function is as follows. Inhibits phosphatase activity of protein phosphatase 1 (PP1) complexes. May positively regulate cell proliferation. The protein is Protein phosphatase 1 regulatory subunit 26 (PPP1R26) of Homo sapiens (Human).